Reading from the N-terminus, the 75-residue chain is Small ribosomal subunit protein bS18c (75 aa).

This sequence belongs to the bacterial ribosomal protein bS18 family. In terms of assembly, part of the 30S ribosomal subunit.

It localises to the plastid. This is Small ribosomal subunit protein bS18c from Aneura mirabilis (Parasitic liverwort).